The chain runs to 595 residues: Adenine deaminase (595 aa).

Belongs to the metallo-dependent hydrolases superfamily. Adenine deaminase family. In terms of assembly, homodimer. The cofactor is Mn(2+).

The enzyme catalyses adenine + H2O + H(+) = hypoxanthine + NH4(+). The polypeptide is Adenine deaminase (Serratia proteamaculans (strain 568)).